Consider the following 432-residue polypeptide: 5'-deoxyadenosine deaminase (432 aa).

2 residues coordinate Zn(2+): His63 and His65. Substrate-binding residues include Glu92 and His184. His211 contacts Zn(2+). The substrate site is built by Glu214 and Asp299. Asp299 is a Zn(2+) binding site.

Belongs to the metallo-dependent hydrolases superfamily. MTA/SAH deaminase family. As to quaternary structure, homotetramer. Requires Zn(2+) as cofactor.

It carries out the reaction 5'-deoxyadenosine + H2O + H(+) = 5'-deoxyinosine + NH4(+). The enzyme catalyses S-adenosyl-L-homocysteine + H2O + H(+) = S-inosyl-L-homocysteine + NH4(+). The catalysed reaction is S-methyl-5'-thioadenosine + H2O + H(+) = S-methyl-5'-thioinosine + NH4(+). It catalyses the reaction adenosine + H2O + H(+) = inosine + NH4(+). The protein operates within amino-acid biosynthesis; S-adenosyl-L-methionine biosynthesis. Functionally, catalyzes the deamination of three SAM-derived enzymatic products, namely 5'-deoxyadenosine, S-adenosyl-L-homocysteine, and 5'-methylthioadenosine, to produce the inosine analogs. Can also deaminate adenosine. The preferred substrate for this enzyme is 5'-deoxyadenosine, but all these substrates are efficiently deaminated. Likely functions in a S-adenosyl-L-methionine (SAM) recycling pathway from S-adenosyl-L-homocysteine (SAH) produced from SAM-dependent methylation reactions. May also be involved in the recycling of 5'-deoxyadenosine, whereupon the 5'-deoxyribose moiety of 5'-deoxyinosine is further metabolized to deoxyhexoses used for the biosynthesis of aromatic amino acids in methanogens. The chain is 5'-deoxyadenosine deaminase from Methanosarcina acetivorans (strain ATCC 35395 / DSM 2834 / JCM 12185 / C2A).